An 844-amino-acid chain; its full sequence is 3',5'-cyclic-AMP phosphodiesterase 4A (844 aa).

The disordered stretch occupies residues 1-124 (MEPPAAPSER…RSPLDSQASP (124 aa)). Residue Ser13 is modified to Phosphoserine. Residues 36-46 (QPRTPIRIQQR) are compositionally biased toward low complexity. The span at 51 to 78 (SAERSETERSPHRPIERADAVDTGDRPG) shows a compositional bias: basic and acidic residues. The span at 82 to 91 (TRMSWPSSFH) shows a compositional bias: polar residues. Residue Ser147 is modified to Phosphoserine; by MAPKAPK2. Phosphoserine is present on residues Ser152, Ser160, and Ser204. Positions 296–317 (PSPTPRQRAFQQPPPSVLRQSQ) are disordered. Ser333 is subject to Phosphoserine. The PDEase domain maps to 343 to 672 (VKTDQEDLLA…DWYHSAIRQS (330 aa)). Residue Lys344 forms a Glycyl lysine isopeptide (Lys-Gly) (interchain with G-Cter in SUMO) linkage. His419 serves as the catalytic Proton donor. Position 419 (His419) interacts with 3',5'-cyclic AMP. 2 residues coordinate AMP: His419 and His423. His423, His459, Asp460, and Asp577 together coordinate Zn(2+). Residues Asp460, Asp577, Gln628, and Phe631 each coordinate AMP. Asp460 serves as a coordination point for Mg(2+). Position 460 (Asp460) interacts with Mn(2+). 2 residues coordinate 3',5'-cyclic AMP: Gln628 and Phe631. Disordered regions lie at residues 668–690 (AIRQ…PSLP) and 818–844 (SACS…GDPA). A phosphoserine mark is found at Ser672 and Ser674. Residues 820–830 (CSGTSGDNSAI) are compositionally biased toward polar residues.

The protein belongs to the cyclic nucleotide phosphodiesterase family. PDE4 subfamily. In terms of assembly, interacts with LYN (via SH3 domain). Interacts with ARRB2. The cofactor is Zn(2+). Mg(2+) is required as a cofactor. Mn(2+) serves as cofactor. Post-translationally, phosphorylated by MAPKAPK2 at Ser-147; it counteracts PKA-induced activation of PDE4A and modulates intracellular cAMP levels. Likely involved in cellular desensitization to cAMP signaling. Proteolytically cleaved by CASP3. Isoform 2 is testis specific.

The protein resides in the cytoplasm. It localises to the cytosol. Its subcellular location is the membrane. It catalyses the reaction 3',5'-cyclic AMP + H2O = AMP + H(+). Its pathway is purine metabolism; 3',5'-cyclic AMP degradation; AMP from 3',5'-cyclic AMP: step 1/1. Its activity is regulated as follows. Inhibited by rolipram. Hydrolyzes the second messenger 3',5'-cyclic AMP (cAMP), which is a key regulator of many important physiological processes. In terms of biological role, efficiently hydrolyzes cAMP. The protein is 3',5'-cyclic-AMP phosphodiesterase 4A (Pde4a) of Rattus norvegicus (Rat).